Here is a 556-residue protein sequence, read N- to C-terminus: 2-succinyl-5-enolpyruvyl-6-hydroxy-3-cyclohexene-1-carboxylate synthase (556 aa).

This sequence belongs to the TPP enzyme family. MenD subfamily. As to quaternary structure, homodimer. Mg(2+) is required as a cofactor. Mn(2+) serves as cofactor. It depends on thiamine diphosphate as a cofactor.

It carries out the reaction isochorismate + 2-oxoglutarate + H(+) = 5-enolpyruvoyl-6-hydroxy-2-succinyl-cyclohex-3-ene-1-carboxylate + CO2. It functions in the pathway quinol/quinone metabolism; 1,4-dihydroxy-2-naphthoate biosynthesis; 1,4-dihydroxy-2-naphthoate from chorismate: step 2/7. It participates in quinol/quinone metabolism; menaquinone biosynthesis. In terms of biological role, catalyzes the thiamine diphosphate-dependent decarboxylation of 2-oxoglutarate and the subsequent addition of the resulting succinic semialdehyde-thiamine pyrophosphate anion to isochorismate to yield 2-succinyl-5-enolpyruvyl-6-hydroxy-3-cyclohexene-1-carboxylate (SEPHCHC). This chain is 2-succinyl-5-enolpyruvyl-6-hydroxy-3-cyclohexene-1-carboxylate synthase, found in Enterobacter sp. (strain 638).